A 252-amino-acid polypeptide reads, in one-letter code: E3 ubiquitin-protein ligase MARCHF3 (252 aa).

An RING-CH-type zinc finger spans residues 62-122 (SSFNDHPMCR…ELCHFRFSVE (61 aa)). Residues Cys70, Cys73, Cys86, Cys88, His96, Cys99, Cys112, and Cys115 each coordinate Zn(2+). A run of 2 helical transmembrane segments spans residues 144-164 (LFGDMVCFLFITPLATISGWL) and 181-201 (AVGLIALTVALFTIYLFWTLV).

It is found in the cytoplasmic vesicle membrane. The protein resides in the early endosome membrane. It carries out the reaction S-ubiquitinyl-[E2 ubiquitin-conjugating enzyme]-L-cysteine + [acceptor protein]-L-lysine = [E2 ubiquitin-conjugating enzyme]-L-cysteine + N(6)-ubiquitinyl-[acceptor protein]-L-lysine.. Its pathway is protein modification; protein ubiquitination. Its function is as follows. E3 ubiquitin-protein ligase which may be involved in endosomal trafficking. E3 ubiquitin ligases accept ubiquitin from an E2 ubiquitin-conjugating enzyme in the form of a thioester and then directly transfer the ubiquitin to targeted substrates. The protein is E3 ubiquitin-protein ligase MARCHF3 (marchf3) of Xenopus laevis (African clawed frog).